Consider the following 509-residue polypeptide: uncharacterized protein (509 aa).

The region spanning 358–480 is the RNase NYN domain; sequence RRIVIIDAIS…IIPFIVENGE (123 aa).

This is an uncharacterized protein from Methanocaldococcus jannaschii (strain ATCC 43067 / DSM 2661 / JAL-1 / JCM 10045 / NBRC 100440) (Methanococcus jannaschii).